Here is a 217-residue protein sequence, read N- to C-terminus: 2-phospho-L-lactate guanylyltransferase (217 aa).

It belongs to the CofC family. Homodimer.

It carries out the reaction (2S)-2-phospholactate + GTP + H(+) = (2S)-lactyl-2-diphospho-5'-guanosine + diphosphate. Its pathway is cofactor biosynthesis; coenzyme F420 biosynthesis. In terms of biological role, guanylyltransferase that catalyzes the activation of (2S)-2-phospholactate (2-PL) as (2S)-lactyl-2-diphospho-5'-guanosine, via the condensation of 2-PL with GTP. It is involved in the biosynthesis of coenzyme F420, a hydride carrier cofactor. The protein is 2-phospho-L-lactate guanylyltransferase of Halorubrum lacusprofundi (strain ATCC 49239 / DSM 5036 / JCM 8891 / ACAM 34).